Here is a 557-residue protein sequence, read N- to C-terminus: MKMGFLFLFCYLLAFLGYSPVDAAVKKYQFDVQVKNISRICNAKPIVTVNGMFPGPTVYAREGDRVIINVTNHVQYNMSIHWHGLKQYRNGWADGPAYITQCPIQTGQSYLYDFNVTGQRGTLWWHAHILWLRATVYGAIVILPAPGKPYPFPQPYQESNIILGEWWNKDVETAVNQANQLGAPPPMSDAHTINGKPGPLFPCSEKHTFVIEAEAGKTYLLRIINAALNDELFFGIAGHNMTVVEIDAVYTKPFTTKAILLGPGQTTNVLVKTDRSPNRYFMAASPFMDAPVSVDNKTVTAILQYKGVPNTVLPILPKLPLPNDTSFALDYNGKLKSLNTPNFPALVPLKVDRRLFYTIGLGINACPTCVNGTNLAASINNITFIMPKTALLKAHYSNISGVFRTDFPDRPPKAFNYTGVPLTANLGTSTGTRLSRVKFNTTIELVLQDTNLLTVESHPFHLHGYNFFVVGTGVGNFDPKKDPAKFNLVDPPERNTVGVPTGGWAAIRFRADNPGVWFMHCHLEVHTMWGLKMAFVVENGETPELSVLPPPKDYPSC.

The N-terminal stretch at Met-1–Ala-23 is a signal peptide. Plastocyanin-like domains follow at residues Asp-31–Gly-147 and Glu-158–Val-308. Residues Asn-36, Asn-69, and Asn-77 are each glycosylated (N-linked (GlcNAc...) asparagine). Residues His-81 and His-83 each contribute to the Cu cation site. Asn-115 carries N-linked (GlcNAc...) asparagine glycosylation. His-126 and His-128 together coordinate Cu cation. N-linked (GlcNAc...) asparagine glycans are attached at residues Asn-240, Asn-296, Asn-323, Asn-371, Asn-381, Asn-398, Asn-416, and Asn-440. The Plastocyanin-like 3 domain occupies Asp-406–Glu-541. Residues His-458, His-461, His-463, His-520, Cys-521, His-522, and His-526 each contribute to the Cu cation site.

This sequence belongs to the multicopper oxidase family. Cu cation is required as a cofactor. As to expression, ubiquitous and constitutive.

It localises to the secreted. It is found in the extracellular space. Its subcellular location is the apoplast. The catalysed reaction is 4 hydroquinone + O2 = 4 benzosemiquinone + 2 H2O. Functionally, lignin degradation and detoxification of lignin-derived products. This Arabidopsis thaliana (Mouse-ear cress) protein is Laccase-11 (LAC11).